Here is a 311-residue protein sequence, read N- to C-terminus: Formimidoylglutamase (311 aa).

Mn(2+) contacts are provided by His130, Asp155, His157, Asp159, Cys242, and Asp244.

The protein belongs to the arginase family. The cofactor is Mn(2+).

It catalyses the reaction N-formimidoyl-L-glutamate + H2O = formamide + L-glutamate. The protein operates within amino-acid degradation; L-histidine degradation into L-glutamate; L-glutamate from N-formimidoyl-L-glutamate (hydrolase route): step 1/1. Functionally, catalyzes the conversion of N-formimidoyl-L-glutamate to L-glutamate and formamide. The chain is Formimidoylglutamase from Staphylococcus aureus (strain Mu3 / ATCC 700698).